Here is a 635-residue protein sequence, read N- to C-terminus: Probable potassium transport system protein Kup (635 aa).

Transmembrane regions (helical) follow at residues 20–40 (MALV…SPLY), 62–82 (VLSL…VTII), 111–131 (AYVV…DGVI), 149–169 (PSLH…VFMV), 180–200 (VFGP…IWNI), 223–243 (GWHG…GEAL), 259–279 (WYFF…ALVL), 292–312 (AVPS…AVIA), 349–369 (IYVP…VLIF), 377–397 (VAYG…LALV), 408–428 (WVLP…IANG), and 429–449 (AKLL…FTLM).

It belongs to the HAK/KUP transporter (TC 2.A.72) family.

It is found in the cell inner membrane. The catalysed reaction is K(+)(in) + H(+)(in) = K(+)(out) + H(+)(out). Its function is as follows. Transport of potassium into the cell. Likely operates as a K(+):H(+) symporter. This is Probable potassium transport system protein Kup from Xanthomonas campestris pv. campestris (strain 8004).